Here is a 77-residue protein sequence, read N- to C-terminus: Large ribosomal subunit protein bL28 (77 aa).

This sequence belongs to the bacterial ribosomal protein bL28 family.

The protein is Large ribosomal subunit protein bL28 of Polaromonas naphthalenivorans (strain CJ2).